Consider the following 110-residue polypeptide: Protein YcgL (110 aa).

In terms of domain architecture, YcgL spans 14-98 (MFCVIYRSSK…PPEDLLKQHL (85 aa)). Residues 88-110 (PPPEDLLKQHLSSVGQNTSHADR) form a disordered region. Residues 97-110 (HLSSVGQNTSHADR) show a composition bias toward polar residues.

This chain is Protein YcgL, found in Salmonella typhi.